We begin with the raw amino-acid sequence, 785 residues long: Probable ATP-dependent RNA helicase ddx17 (785 aa).

Composition is skewed to low complexity over residues 1 to 11 (MSYNSSNSGSG), 18 to 37 (SGNSSYSSTSRGGSSYGNRS), 49 to 95 (SYNR…YGPS), and 105 to 177 (GSSS…NGYS). Positions 1 to 233 (MSYNSSNSGS…TPSTSYNGGS (233 aa)) are disordered. A compositionally biased stretch (polar residues) spans 178 to 191 (KPTSNYSYSNGYTG). Low complexity predominate over residues 192-233 (PTTNYSSYSNGYSTPPTSTSTSSSSTTTTTTTTPSTSYNGGS). A Q motif motif is present at residues 384–412 (MQFTQAPFPGYLMKEIIGAGFPNPTPIQS). Positions 415–590 (WPIALKGRDI…HDFLTDHIQV (176 aa)) constitute a Helicase ATP-binding domain. Position 428–435 (428–435 (AKTGSGKT)) interacts with ATP. The short motif at 538–541 (DEAD) is the DEAD box element. Residues 602-763 (NVRQIVEVCQ…KIPIELSNLS (162 aa)) form the Helicase C-terminal domain. Residues 764-774 (VTPSTSSNTKK) are compositionally biased toward polar residues. Residues 764–785 (VTPSTSSNTKKFSPYPTYSKRY) are disordered.

This sequence belongs to the DEAD box helicase family. DDX5/DBP2 subfamily.

Its subcellular location is the cytoplasm. It localises to the nucleus. It catalyses the reaction ATP + H2O = ADP + phosphate + H(+). Its function is as follows. Probable ATP-dependent RNA helicase which may be involved nonsense-mediated mRNA decay and ribosome biogenesis through rRNA processing. This Dictyostelium discoideum (Social amoeba) protein is Probable ATP-dependent RNA helicase ddx17 (ddx17).